A 134-amino-acid polypeptide reads, in one-letter code: Putative membrane protein insertion efficiency factor (134 aa).

The protein belongs to the UPF0161 family.

It is found in the cell inner membrane. Its function is as follows. Could be involved in insertion of integral membrane proteins into the membrane. This chain is Putative membrane protein insertion efficiency factor, found in Rhizobium etli (strain ATCC 51251 / DSM 11541 / JCM 21823 / NBRC 15573 / CFN 42).